The sequence spans 444 residues: Exopolygalacturonase clone GBGA483 (444 aa).

A signal peptide spans 1–23 (MVGSHKASGVLLVLLVVMATTIA). 5 PbH1 repeats span residues 220 to 246 (CKNI…HIGR), 247 to 268 (SNGV…SIGD), 270 to 290 (TENL…SIGS), 300 to 321 (VKGV…RIKT), and 330 to 351 (ASNI…LIDQ). Residue Asn222 is glycosylated (N-linked (GlcNAc...) asparagine). The Proton donor role is filled by Asp261. Cys263 and Cys280 are joined by a disulfide. The active site involves His284. A glycan (N-linked (GlcNAc...) asparagine) is linked at Asn342. Intrachain disulfides connect Cys391-Cys397 and Cys420-Cys436.

Belongs to the glycosyl hydrolase 28 family.

It is found in the secreted. The protein localises to the cell wall. The enzyme catalyses [(1-&gt;4)-alpha-D-galacturonosyl](n) + H2O = alpha-D-galacturonate + [(1-&gt;4)-alpha-D-galacturonosyl](n-1). Its function is as follows. May function in depolymerizing pectin during pollen development, germination, and tube growth. Acts as an exo-polygalacturonase. The sequence is that of Exopolygalacturonase clone GBGA483 from Arabidopsis thaliana (Mouse-ear cress).